The sequence spans 394 residues: G2/mitotic-specific cyclin-B (394 aa).

The tract at residues 360–394 (QSHPSPNSRLDQEEDMASSKFMSDQQATQELKSIR) is disordered. Over residues 379–394 (KFMSDQQATQELKSIR) the composition is skewed to polar residues.

This sequence belongs to the cyclin family. Cyclin AB subfamily. Interacts with the CDK1 protein kinase to form a serine/threonine kinase holoenzyme complex also known as maturation promoting factor (MPF). The cyclin subunit imparts substrate specificity to the complex.

Its function is as follows. Essential for the control of the cell cycle at the G2/M (mitosis) transition. The polypeptide is G2/mitotic-specific cyclin-B (Patiria pectinifera (Starfish)).